The chain runs to 177 residues: ATP-dependent protease subunit HslV (177 aa).

Threonine 7 is an active-site residue. The Na(+) site is built by alanine 162, cysteine 165, and threonine 168.

It belongs to the peptidase T1B family. HslV subfamily. In terms of assembly, a double ring-shaped homohexamer of HslV is capped on each side by a ring-shaped HslU homohexamer. The assembly of the HslU/HslV complex is dependent on binding of ATP.

It is found in the cytoplasm. It carries out the reaction ATP-dependent cleavage of peptide bonds with broad specificity.. With respect to regulation, allosterically activated by HslU binding. Its function is as follows. Protease subunit of a proteasome-like degradation complex believed to be a general protein degrading machinery. The polypeptide is ATP-dependent protease subunit HslV (Leptospira biflexa serovar Patoc (strain Patoc 1 / Ames)).